Consider the following 449-residue polypeptide: Tol-Pal system protein TolB (449 aa).

Positions methionine 1–glycine 36 are cleaved as a signal peptide.

This sequence belongs to the TolB family. The Tol-Pal system is composed of five core proteins: the inner membrane proteins TolA, TolQ and TolR, the periplasmic protein TolB and the outer membrane protein Pal. They form a network linking the inner and outer membranes and the peptidoglycan layer.

The protein localises to the periplasm. In terms of biological role, part of the Tol-Pal system, which plays a role in outer membrane invagination during cell division and is important for maintaining outer membrane integrity. The protein is Tol-Pal system protein TolB of Rhodopseudomonas palustris (strain HaA2).